The following is an 839-amino-acid chain: Elongation factor 2 (839 aa).

One can recognise a tr-type G domain in the interval 17–248 (ENIRNMSVIA…MGRLWGDSYF (232 aa)). GTP contacts are provided by residues 26 to 33 (AHVDHGKT), 156 to 159 (NKVD), and 211 to 213 (SGL). A Diphthamide modification is found at H698.

This sequence belongs to the TRAFAC class translation factor GTPase superfamily. Classic translation factor GTPase family. EF-G/EF-2 subfamily. In terms of processing, phosphorylation by EF-2 kinase completely inactivates EF-2.

The protein localises to the cytoplasm. The catalysed reaction is GTP + H2O = GDP + phosphate + H(+). Catalyzes the GTP-dependent ribosomal translocation step during translation elongation. During this step, the ribosome changes from the pre-translocational (PRE) to the post-translocational (POST) state as the newly formed A-site-bound peptidyl-tRNA and P-site-bound deacylated tRNA move to the P and E sites, respectively. Catalyzes the coordinated movement of the two tRNA molecules, the mRNA and conformational changes in the ribosome. The protein is Elongation factor 2 (efbA) of Dictyostelium discoideum (Social amoeba).